The chain runs to 252 residues: Chitooligosaccharide deacetylase (252 aa).

Histidine 125 lines the Mg(2+) pocket.

Belongs to the YdjC deacetylase family. ChbG subfamily. Homodimer. Requires Mg(2+) as cofactor.

It is found in the cytoplasm. The enzyme catalyses N,N'-diacetylchitobiose + H2O = N-acetyl-beta-D-glucosaminyl-(1-&gt;4)-D-glucosamine + acetate. It catalyses the reaction diacetylchitobiose-6'-phosphate + H2O = N'-monoacetylchitobiose-6'-phosphate + acetate. The protein operates within glycan degradation; chitin degradation. Functionally, involved in the degradation of chitin. ChbG is essential for growth on the acetylated chitooligosaccharides chitobiose and chitotriose but is dispensable for growth on cellobiose and chitosan dimer, the deacetylated form of chitobiose. Deacetylation of chitobiose-6-P and chitotriose-6-P is necessary for both the activation of the chb promoter by the regulatory protein ChbR and the hydrolysis of phosphorylated beta-glucosides by the phospho-beta-glucosidase ChbF. Catalyzes the removal of only one acetyl group from chitobiose-6-P to yield monoacetylchitobiose-6-P, the inducer of ChbR and the substrate of ChbF. In Escherichia coli O157:H7, this protein is Chitooligosaccharide deacetylase.